The primary structure comprises 326 residues: Flap endonuclease 1 (326 aa).

The segment at 1–98 (MGVQFGDFIP…KTRKVRREMK (98 aa)) is N-domain. D27, D80, E152, E154, D173, D175, and D224 together coordinate Mg(2+). Residues 116-245 (EAAKYAKRVS…KRAYELVRSG (130 aa)) are I-domain. Positions 317 to 325 (KQKTLDAWF) are interaction with PCNA.

Belongs to the XPG/RAD2 endonuclease family. FEN1 subfamily. As to quaternary structure, interacts with PCNA. PCNA stimulates the nuclease activity without altering cleavage specificity. It depends on Mg(2+) as a cofactor.

In terms of biological role, structure-specific nuclease with 5'-flap endonuclease and 5'-3' exonuclease activities involved in DNA replication and repair. During DNA replication, cleaves the 5'-overhanging flap structure that is generated by displacement synthesis when DNA polymerase encounters the 5'-end of a downstream Okazaki fragment. Binds the unpaired 3'-DNA end and kinks the DNA to facilitate 5' cleavage specificity. Cleaves one nucleotide into the double-stranded DNA from the junction in flap DNA, leaving a nick for ligation. Also involved in the base excision repair (BER) pathway. Acts as a genome stabilization factor that prevents flaps from equilibrating into structures that lead to duplications and deletions. Also possesses 5'-3' exonuclease activity on nicked or gapped double-stranded DNA. In Methanocaldococcus jannaschii (strain ATCC 43067 / DSM 2661 / JAL-1 / JCM 10045 / NBRC 100440) (Methanococcus jannaschii), this protein is Flap endonuclease 1.